The chain runs to 187 residues: Holliday junction branch migration complex subunit RuvA (187 aa).

The tract at residues 1 to 64 (MIEYVRGIIE…EDGFQIFGFK (64 aa)) is domain I. A domain II region spans residues 65-136 (TKEELDLFEK…ELKDKLPKEI (72 aa)). The tract at residues 136–139 (IVFE) is flexible linker. Positions 140–187 (GDNNFSNEALEALLALGYTKSEAIYALADITCDSVEDAVKQALKKLMK) are domain III.

Belongs to the RuvA family. Homotetramer. Forms an RuvA(8)-RuvB(12)-Holliday junction (HJ) complex. HJ DNA is sandwiched between 2 RuvA tetramers; dsDNA enters through RuvA and exits via RuvB. An RuvB hexamer assembles on each DNA strand where it exits the tetramer. Each RuvB hexamer is contacted by two RuvA subunits (via domain III) on 2 adjacent RuvB subunits; this complex drives branch migration. In the full resolvosome a probable DNA-RuvA(4)-RuvB(12)-RuvC(2) complex forms which resolves the HJ.

It is found in the cytoplasm. The RuvA-RuvB-RuvC complex processes Holliday junction (HJ) DNA during genetic recombination and DNA repair, while the RuvA-RuvB complex plays an important role in the rescue of blocked DNA replication forks via replication fork reversal (RFR). RuvA specifically binds to HJ cruciform DNA, conferring on it an open structure. The RuvB hexamer acts as an ATP-dependent pump, pulling dsDNA into and through the RuvAB complex. HJ branch migration allows RuvC to scan DNA until it finds its consensus sequence, where it cleaves and resolves the cruciform DNA. In Thermoanaerobacter pseudethanolicus (strain ATCC 33223 / 39E) (Clostridium thermohydrosulfuricum), this protein is Holliday junction branch migration complex subunit RuvA.